Here is a 142-residue protein sequence, read N- to C-terminus: 3-hydroxyacyl-[acyl-carrier-protein] dehydratase FabZ (142 aa).

His-48 is a catalytic residue.

Belongs to the thioester dehydratase family. FabZ subfamily.

The protein localises to the cytoplasm. The enzyme catalyses a (3R)-hydroxyacyl-[ACP] = a (2E)-enoyl-[ACP] + H2O. Involved in unsaturated fatty acids biosynthesis. Catalyzes the dehydration of short chain beta-hydroxyacyl-ACPs and long chain saturated and unsaturated beta-hydroxyacyl-ACPs. This Clostridioides difficile (strain 630) (Peptoclostridium difficile) protein is 3-hydroxyacyl-[acyl-carrier-protein] dehydratase FabZ.